The chain runs to 359 residues: Mannose-1-phosphate guanylyltransferase catalytic subunit beta (359 aa).

Residues 2 to 221 are substrate-binding domain; it reads KALILVGGFG…EGFWMDVGQP (220 aa). Asp-109 lines the GDP-alpha-D-mannose pocket. Asp-109 lines the Mg(2+) pocket. Lys-161 is an active-site residue. Asp-217 is a GDP-alpha-D-mannose binding site. Asp-217 is a binding site for Mg(2+). The tract at residues 244 to 359 is hexapeptide repeat domain; the sequence is ATGNGIIGPV…SSIPEPEIIM (116 aa).

The protein belongs to the transferase hexapeptide repeat family. In terms of assembly, component of the GMPPA-GMPPB mannose-1-phosphate guanylyltransferase complex composed of 4 GMPPA subunits and 8 gmppB subunits; the complex is organized into three layers, a central layer made up of 2 gmppA dimers sandwiched between two layers each made up of 2 gmppB dimers. gmppB catalytic activity is reduced when part of the complex and binding of GDP-alpha-D-Mannose by gmppA induces allosteric feedback inhibition of gmppB. It depends on Mg(2+) as a cofactor.

It catalyses the reaction alpha-D-mannose 1-phosphate + GTP + H(+) = GDP-alpha-D-mannose + diphosphate. Its pathway is nucleotide-sugar biosynthesis; GDP-alpha-D-mannose biosynthesis; GDP-alpha-D-mannose from alpha-D-mannose 1-phosphate (GTP route): step 1/1. Enzyme activity is reduced by incorporation into the GMPPA-GMPPB mannose-1-phosphate guanylyltransferase complex. Allosterically inhibited, when part of the GMPPA-GMPPB complex, by GDP-alpha-D-mannose binding to GMPPA. Catalytic subunit of the GMPPA-GMPPB mannose-1-phosphate guanylyltransferase complex. Catalyzes the formation of GDP-mannose, an essential precursor of glycan moieties of glycoproteins and glycolipids. Can catalyze the reverse reaction in vitro. Together with GMPPA regulates GDP-alpha-D-mannose levels. This is Mannose-1-phosphate guanylyltransferase catalytic subunit beta (gmppB) from Dictyostelium discoideum (Social amoeba).